The primary structure comprises 358 residues: RNA demethylase ALKBH5 (358 aa).

Residues 1 to 50 form a disordered region; it reads MSATYTDLREKLQSLYRDSPKEVRKRKQPTSDTEEEEAASEPEEEEEARK. Basic and acidic residues predominate over residues 7-22; it reads DLREKLQSLYRDSPKE. The span at 32–46 shows a compositional bias: acidic residues; that stretch reads DTEEEEAASEPEEEE. Y105 is a catalytic residue. 2-oxoglutarate contacts are provided by N159, Y161, H170, H232, and R243. Cysteines 196 and 233 form a disulfide. Disordered stretches follow at residues 259–312 and 334–358; these read EMKS…RRSV and DYVDTYTETGEDDGSPVRKVKMRRH. Positions 262-278 are enriched in polar residues; sequence SLSSSYQPERLQGSNRQ. Residues 279–288 are compositionally biased toward basic residues; that stretch reads HILKPKRSHR. The segment covering 289 to 310 has biased composition (basic and acidic residues); it reads KADPDAAHRPRILEMDKEENRR.

The protein belongs to the alkB family. As to quaternary structure, monomer. The cofactor is Fe(2+).

It is found in the nucleus speckle. The enzyme catalyses an N(6)-methyladenosine in mRNA + 2-oxoglutarate + O2 = an adenosine in mRNA + formaldehyde + succinate + CO2. Its function is as follows. Dioxygenase that specifically demethylates N(6)-methyladenosine (m6A) RNA, the most prevalent internal modification of messenger RNA (mRNA) in higher eukaryotes. Demethylates RNA by oxidative demethylation, which requires molecular oxygen, alpha-ketoglutarate and iron. Demethylation of m6A mRNA affects mRNA processing, translation and export. This is RNA demethylase ALKBH5 (alkbh5) from Xenopus tropicalis (Western clawed frog).